A 211-amino-acid polypeptide reads, in one-letter code: Probable molybdenum cofactor guanylyltransferase (211 aa).

GTP-binding positions include 21 to 23 (LAG), Lys-33, Asp-84, and Asp-116. Asp-116 contributes to the Mg(2+) binding site.

Belongs to the MobA family. The cofactor is Mg(2+).

The protein localises to the cytoplasm. It carries out the reaction Mo-molybdopterin + GTP + H(+) = Mo-molybdopterin guanine dinucleotide + diphosphate. Functionally, transfers a GMP moiety from GTP to Mo-molybdopterin (Mo-MPT) cofactor (Moco or molybdenum cofactor) to form Mo-molybdopterin guanine dinucleotide (Mo-MGD) cofactor. In Rhodopirellula baltica (strain DSM 10527 / NCIMB 13988 / SH1), this protein is Probable molybdenum cofactor guanylyltransferase.